The primary structure comprises 522 residues: Zinc finger and BTB domain-containing protein 18 (522 aa).

One can recognise a BTB domain in the interval 24–91 (CDCTVLVGDA…MYEGKLQFKD (68 aa)). The segment covering 121 to 143 (ATTEADSTKKEEDASSCSDKVES) has biased composition (basic and acidic residues). Residues 121–165 (ATTEADSTKKEEDASSCSDKVESLSDGSSHMAGDLPSDEDEGEDE) are disordered. The residue at position 157 (Ser-157) is a Phosphoserine. Lys-273 participates in a covalent cross-link: Glycyl lysine isopeptide (Lys-Gly) (interchain with G-Cter in SUMO2). Positions 310–427 (EPAHLAPLRE…TFSCMYTLKR (118 aa)) are interaction with DNMT3A. 4 consecutive C2H2-type zinc fingers follow at residues 370–392 (FMCP…LSTH), 410–432 (PTCS…ERTH), 438–460 (YTCT…AVVH), and 466–489 (HACK…RKFH). Ser-516 and Ser-517 each carry phosphoserine.

Belongs to the krueppel C2H2-type zinc-finger protein family. ZBTB18 subfamily. As to quaternary structure, interacts with DNMT3A.

It is found in the nucleus. In terms of biological role, transcriptional repressor that plays a role in various developmental processes such as myogenesis and brain development. Specifically binds the consensus DNA sequence 5'-[AC]ACATCTG[GT][AC]-3' which contains the E box core, and acts by recruiting chromatin remodeling multiprotein complexes. Plays a key role in myogenesis by directly repressing the expression of ID2 and ID3, 2 inhibitors of skeletal myogenesis. Also involved in controlling cell division of progenitor cells and regulating the survival of postmitotic cortical neurons. May also play a role in the organization of chromosomes in the nucleus. The sequence is that of Zinc finger and BTB domain-containing protein 18 (ZBTB18) from Bos taurus (Bovine).